We begin with the raw amino-acid sequence, 80 residues long: Protein transport protein SSS1 (80 aa).

At 1-46 (MARASEKGEEKKQSNNQVEKLVEAPVEFVREGTQFLAKCKKPDLKE) the chain is on the cytoplasmic side. A helical membrane pass occupies residues 47 to 75 (YTKIVKAVGIGFIAVGIIGYAIKLIHIPI). Residues 76–80 (RYVIV) are Extracellular-facing.

It belongs to the SecE/SEC61-gamma family. In terms of assembly, component of the heterotrimeric Sec61 complex, which is composed of SSH1, SBH1 and SSS1. Presumably three to four Sec61 heterotrimers assemble into an oligomeric ring with a central aqueous pore. In cotranslational ER import, the pore diameter varies from 9-15 A in a ribosome-free resting state to 40-60 A in a functional state when associated with the ribosome. The Sec61 complex is part of a channel-forming translocon complex whose composition seem to change dependent upon different functional states. During post-translational ER import the Sec61 complex associates with the Sec62/63 complex to form the Sec complex. SSH1 is a component of the heterotrimeric Ssh1 complex, which is composed of SSH1, SBH2 and SSS1. SSS1 interacts with OST1, OST4, SWP1 and WBP1, components of the OT complex.

It is found in the endoplasmic reticulum membrane. Functionally, part of the Sec61 complex, which is the major component of channel-forming translocon complex that mediates protein translocation across the endoplasmic reticulum (ER). The functional states of the translocon complex include co- and post-translational ER import, cotranslational membrane protein integration and retrograde transport of misfolded proteins out of the ER. In the cotranslational pathway, ribosomes synthesizing presecretory proteins are targeted to the translocon by the cytosolic signal recognition particle (SRP) and its ER-localized receptor. The association of the Sec61 complex with the ribosome is mediated by the 28S rRNA of the large ribosomal subunit. SRP-independent post-translational translocation requires the association of additional factors, such as the Sec62/63 complex and KAR2. Also part of the Ssh1 complex, which probably is the major component of a channel-forming translocon complex that may function exclusively in the cotranslational pathway of protein ER import. The sequence is that of Protein transport protein SSS1 (SSS1) from Saccharomyces cerevisiae (strain ATCC 204508 / S288c) (Baker's yeast).